The following is a 193-amino-acid chain: CD70 antigen (193 aa).

The Cytoplasmic segment spans residues 1-17 (MPEEGSGCSVRRRPYGC). A helical; Signal-anchor for type II membrane protein membrane pass occupies residues 18-38 (VLRAALVPLVAGLVICLVVCI). Topologically, residues 39 to 193 (QRFAQAQQQL…TFFGVQWVRP (155 aa)) are extracellular. The region spanning 56-191 (DVAELQLNHT…DETFFGVQWV (136 aa)) is the THD domain. Asparagine 63 carries N-linked (GlcNAc...) asparagine glycosylation. 2 disulfide bridges follow: cysteine 115/cysteine 151 and cysteine 133/cysteine 168. The N-linked (GlcNAc...) asparagine glycan is linked to asparagine 170.

It belongs to the tumor necrosis factor family. As to quaternary structure, homotrimer. Post-translationally, N-glycosylated.

It is found in the cell membrane. Expressed at the plasma membrane of B cells, it is the ligand of the CD27 receptor which is specifically expressed at the surface of T cells. The CD70-CD27 signaling pathway mediates antigen-specific T cell activation and expansion which in turn provides immune surveillance of B cells. The sequence is that of CD70 antigen from Homo sapiens (Human).